An 873-amino-acid chain; its full sequence is Leucine--tRNA ligase (873 aa).

The 'HIGH' region motif lies at 42–52 (PYPSGKLHMGH). Positions 628–632 (KMSKS) match the 'KMSKS' region motif. Lys631 provides a ligand contact to ATP.

It belongs to the class-I aminoacyl-tRNA synthetase family.

The protein resides in the cytoplasm. It catalyses the reaction tRNA(Leu) + L-leucine + ATP = L-leucyl-tRNA(Leu) + AMP + diphosphate. The protein is Leucine--tRNA ligase of Azoarcus sp. (strain BH72).